The sequence spans 220 residues: Iron-sulfur cluster repair protein YtfE (220 aa).

Belongs to the RIC family. YtfE subfamily. As to quaternary structure, homodimer.

It is found in the cytoplasm. Di-iron-containing protein involved in the repair of iron-sulfur clusters damaged by oxidative and nitrosative stress conditions. The protein is Iron-sulfur cluster repair protein YtfE of Citrobacter koseri (strain ATCC BAA-895 / CDC 4225-83 / SGSC4696).